A 315-amino-acid chain; its full sequence is Olfactory receptor 5M1 (315 aa).

At 1–25 (MFSPNHTIVTEFILLGLTDDPVLEK) the chain is on the extracellular side. Asn-5 carries an N-linked (GlcNAc...) asparagine glycan. Residues 26-46 (ILFGVFLAIYLITLAGNLCMI) form a helical membrane-spanning segment. Topologically, residues 47–54 (LLIRTNSH) are cytoplasmic. A helical transmembrane segment spans residues 55–75 (LQTPMYFFLGHLSFVDICYSS). The Extracellular portion of the chain corresponds to 76 to 99 (NVTPNMLHNFLSEQKTISYAGCFT). Cys-97 and Cys-189 form a disulfide bridge. Residues 100–120 (QCLLFIALVITEFYILASMAL) traverse the membrane as a helical segment. The Cytoplasmic portion of the chain corresponds to 121 to 139 (DRYVAICSPLHYSSRMSKN). The helical transmembrane segment at 140 to 160 (ICVCLVTIPYMYGFLSGFSQS) threads the bilayer. Topologically, residues 161–196 (LLTFHLSFCGSLEINHFYCADPPLIMLACSDTRVKK) are extracellular. A helical transmembrane segment spans residues 197 to 217 (MAMFVVAGFNLSSSLFIILLS). Residues 218-237 (YLFIFAAIFRIRSAEGRHKA) lie on the Cytoplasmic side of the membrane. Residues 238–258 (FSTCASHLTIVTLFYGTLFCM) traverse the membrane as a helical segment. Residues 259 to 271 (YVRPPSEKSVEES) are Extracellular-facing. Residues 272-292 (KITAVFYTFLSPMLNPLIYSL) traverse the membrane as a helical segment. The Cytoplasmic segment spans residues 293-315 (RNTDVILAMQQMIRGKSFHKIAV).

Belongs to the G-protein coupled receptor 1 family.

The protein resides in the cell membrane. Odorant receptor. This Homo sapiens (Human) protein is Olfactory receptor 5M1 (OR5M1).